The primary structure comprises 350 residues: Protein O-mannose kinase (350 aa).

Residue Met-1 is modified to N-acetylmethionine. Over 1 to 20 (MEKQPQNSRRGLAPREVPPA) the chain is Cytoplasmic. The helical; Signal-anchor for type II membrane protein transmembrane segment at 21 to 43 (VGLLLIMALMNTLLYLCLDHFFI) threads the bilayer. At 44-350 (APRQSTVDPT…AMMSQAREML (307 aa)) the chain is on the lumenal side. A Protein kinase domain is found at 81–350 (VRQLKRVGEG…AMMSQAREML (270 aa)). Asn-165, Asn-220, and Asn-235 each carry an N-linked (GlcNAc...) asparagine glycan.

It belongs to the protein kinase superfamily. Ser/Thr protein kinase family. STKL subfamily. As to expression, highest expression is observed in brain, skeletal muscle, kidney and heart in fetal and adult tissues.

It is found in the endoplasmic reticulum membrane. The enzyme catalyses 3-O-[beta-D-GalNAc-(1-&gt;3)-beta-D-GlcNAc-(1-&gt;4)-alpha-D-Man]-L-Thr-[protein] + ATP = 3-O-[beta-D-GalNAc-(1-&gt;3)-beta-D-GlcNAc-(1-&gt;4)-(O-6-P-alpha-D-Man)]-Thr-[protein] + ADP + H(+). Functionally, protein O-mannose kinase that specifically mediates phosphorylation at the 6-position of an O-mannose of the trisaccharide (N-acetylgalactosamine (GalNAc)-beta-1,3-N-acetylglucosamine (GlcNAc)-beta-1,4-mannose) to generate phosphorylated O-mannosyl trisaccharide (N-acetylgalactosamine-beta-1,3-N-acetylglucosamine-beta-1,4-(phosphate-6-)mannose). Phosphorylated O-mannosyl trisaccharide is a carbohydrate structure present in alpha-dystroglycan (DAG1), which is required for binding laminin G-like domain-containing extracellular proteins with high affinity. Only shows kinase activity when the GalNAc-beta-3-GlcNAc-beta-terminus is linked to the 4-position of O-mannose, suggesting that this disaccharide serves as the substrate recognition motif. This chain is Protein O-mannose kinase (POMK), found in Homo sapiens (Human).